The following is a 560-amino-acid chain: Eukaryotic translation initiation factor 3 subunit D-1 (560 aa).

Positions 98–166 (VQKPPHQRGR…RGPPPKMRES (69 aa)) are disordered. Basic residues predominate over residues 100–121 (KPPHQRGRFRNMRNSRSGRGRN). Thr128 is modified (phosphothreonine). Positions 147 to 156 (GRGMGKKFGH) are enriched in basic residues. The tract at residues 291-305 (EFDLLTVNESSVEPP) is RNA gate.

It belongs to the eIF-3 subunit D family. In terms of assembly, component of the eukaryotic translation initiation factor 3 (eIF-3) complex. The eIF-3 complex interacts with pix.

Its subcellular location is the cytoplasm. In terms of biological role, mRNA cap-binding component of the eukaryotic translation initiation factor 3 (eIF-3) complex, which is involved in protein synthesis of a specialized repertoire of mRNAs and, together with other initiation factors, stimulates binding of mRNA and methionyl-tRNAi to the 40S ribosome. The eIF-3 complex specifically targets and initiates translation of a subset of mRNAs involved in cell proliferation. In the eIF-3 complex, eif3d specifically recognizes and binds the 7-methylguanosine cap of a subset of mRNAs. The sequence is that of Eukaryotic translation initiation factor 3 subunit D-1 from Drosophila yakuba (Fruit fly).